Here is a 390-residue protein sequence, read N- to C-terminus: Trehalose-phosphate phosphatase (390 aa).

The Nucleophile role is filled by aspartate 150. 3 residues coordinate Mg(2+): aspartate 150, aspartate 152, and aspartate 333. Residue 150–152 participates in substrate binding; it reads DFD.

The protein belongs to the trehalose phosphatase family. The cofactor is Mg(2+).

The enzyme catalyses alpha,alpha-trehalose 6-phosphate + H2O = alpha,alpha-trehalose + phosphate. The protein operates within glycan biosynthesis; trehalose biosynthesis. Its function is as follows. Removes the phosphate from trehalose 6-phosphate to produce free trehalose. This is Trehalose-phosphate phosphatase (otsB) from Mycobacterium ulcerans (strain Agy99).